We begin with the raw amino-acid sequence, 255 residues long: Ribonuclease HII (255 aa).

Residues 70 to 255 (DLVAGIDEVG…FEPVPEFLIK (186 aa)) enclose the RNase H type-2 domain. A divalent metal cation contacts are provided by D76, E77, and D168.

This sequence belongs to the RNase HII family. Mn(2+) serves as cofactor. Mg(2+) is required as a cofactor.

It localises to the cytoplasm. The catalysed reaction is Endonucleolytic cleavage to 5'-phosphomonoester.. In terms of biological role, endonuclease that specifically degrades the RNA of RNA-DNA hybrids. This chain is Ribonuclease HII, found in Pediococcus pentosaceus (strain ATCC 25745 / CCUG 21536 / LMG 10740 / 183-1w).